Reading from the N-terminus, the 330-residue chain is Cyclin N-terminal domain-containing protein 1 (330 aa).

The Cyclin N-terminal domain maps to 27-178; sequence DALLHLAQQN…VLKSLNFRIN (152 aa).

Interacts with PRR19; this interaction promotes crossover formation. Interacts with RFC3 and RFC4; these interactions facilitate crossover formation. Interacts with CDC34; this interaction regulates the cell-cycle progression.

Its subcellular location is the nucleus. The protein localises to the cytoplasm. It is found in the chromosome. Functionally, plays a role in the different steps of crossover formation during meiotic recombination. Participates in the crossover differentiation step of crossover-specific recombination intermediates through its interaction with PRR19. In addition, stimulates crossover formation through the interactions with RFC3 and RFC4 and simultaneously regulates cell-cycle progression through interactions with CDC34 and subsequent ubiquitination of WEE1. May also participates in an active deselection process that destabilizes or removes excess pre-CO intermediates. The polypeptide is Cyclin N-terminal domain-containing protein 1 (Homo sapiens (Human)).